The chain runs to 59 residues: Large ribosomal subunit protein bL32 (59 aa).

Residues 1 to 16 (MAVPKRKTSPSRRGMR) are compositionally biased toward basic residues. Positions 1–59 (MAVPKRKTSPSRRGMRRSADALKAPTYVEDKNSGELRRPHHIDLKSGMYRGRQVLEPKE) are disordered. Positions 28–44 (VEDKNSGELRRPHHIDL) are enriched in basic and acidic residues.

The protein belongs to the bacterial ribosomal protein bL32 family.

This Brucella abortus (strain S19) protein is Large ribosomal subunit protein bL32.